Reading from the N-terminus, the 294-residue chain is Golgi to ER traffic protein 2 (294 aa).

Residues M1–D104 form a disordered region. The Cytoplasmic segment spans residues M1–N166. Basic residues predominate over residues K12–K21. Residues I34–D65 show a composition bias toward polar residues. Basic and acidic residues predominate over residues K85–Q95. A helical membrane pass occupies residues L167 to L187. The Lumenal segment spans residues T188–N205. A helical transmembrane segment spans residues F206–L225. Residues Q226–D272 lie on the Cytoplasmic side of the membrane. Residues V273–L293 traverse the membrane as a helical segment. Position 294 (I294) is a topological domain, lumenal.

This sequence belongs to the GET2 family. In terms of assembly, component of the Golgi to ER traffic (GET) complex, which is composed of GET1, GET2 and GET3. Within the complex, GET1 and GET2 form a heterotetramer which is stabilized by phosphatidylinositol binding and which binds to the GET3 homodimer.

It is found in the endoplasmic reticulum membrane. It localises to the golgi apparatus membrane. Its function is as follows. Required for the post-translational delivery of tail-anchored (TA) proteins to the endoplasmic reticulum. Together with GET1, acts as a membrane receptor for soluble GET3, which recognizes and selectively binds the transmembrane domain of TA proteins in the cytosol. The GET complex cooperates with the HDEL receptor ERD2 to mediate the ATP-dependent retrieval of resident ER proteins that contain a C-terminal H-D-E-L retention signal from the Golgi to the ER. The protein is Golgi to ER traffic protein 2 of Vanderwaltozyma polyspora (strain ATCC 22028 / DSM 70294 / BCRC 21397 / CBS 2163 / NBRC 10782 / NRRL Y-8283 / UCD 57-17) (Kluyveromyces polysporus).